Consider the following 486-residue polypeptide: Bifunctional protein GlmU (486 aa).

The segment at 1–236 (MTDQNLAIVV…SWLVDGINDR (236 aa)) is pyrophosphorylase. Residues 11 to 14 (LAAG), Lys-25, Gln-78, and 83 to 84 (GT) contribute to the UDP-N-acetyl-alpha-D-glucosamine site. Residue Asp-109 participates in Mg(2+) binding. Residues Gly-146, Glu-161, Asn-176, and Asn-234 each coordinate UDP-N-acetyl-alpha-D-glucosamine. Asn-234 is a binding site for Mg(2+). The tract at residues 237–257 (AQLSEAAAKLNALTVRAWQLA) is linker. Positions 258 to 486 (GVTVQDPATT…ASNAAEESGE (229 aa)) are N-acetyltransferase. Positions 339 and 357 each coordinate UDP-N-acetyl-alpha-D-glucosamine. His-369 acts as the Proton acceptor in catalysis. Tyr-372 and Asn-383 together coordinate UDP-N-acetyl-alpha-D-glucosamine. Acetyl-CoA-binding positions include Ala-386, 392-393 (NY), and Ala-429. The tract at residues 459–486 (RRPGTDAARAAQRNGAAEASNAAEESGE) is disordered. The segment covering 465 to 486 (AARAAQRNGAAEASNAAEESGE) has biased composition (low complexity).

This sequence in the N-terminal section; belongs to the N-acetylglucosamine-1-phosphate uridyltransferase family. It in the C-terminal section; belongs to the transferase hexapeptide repeat family. As to quaternary structure, homotrimer. It depends on Mg(2+) as a cofactor.

Its subcellular location is the cytoplasm. It carries out the reaction alpha-D-glucosamine 1-phosphate + acetyl-CoA = N-acetyl-alpha-D-glucosamine 1-phosphate + CoA + H(+). It catalyses the reaction N-acetyl-alpha-D-glucosamine 1-phosphate + UTP + H(+) = UDP-N-acetyl-alpha-D-glucosamine + diphosphate. It functions in the pathway nucleotide-sugar biosynthesis; UDP-N-acetyl-alpha-D-glucosamine biosynthesis; N-acetyl-alpha-D-glucosamine 1-phosphate from alpha-D-glucosamine 6-phosphate (route II): step 2/2. It participates in nucleotide-sugar biosynthesis; UDP-N-acetyl-alpha-D-glucosamine biosynthesis; UDP-N-acetyl-alpha-D-glucosamine from N-acetyl-alpha-D-glucosamine 1-phosphate: step 1/1. Its pathway is bacterial outer membrane biogenesis; LPS lipid A biosynthesis. Its function is as follows. Catalyzes the last two sequential reactions in the de novo biosynthetic pathway for UDP-N-acetylglucosamine (UDP-GlcNAc). The C-terminal domain catalyzes the transfer of acetyl group from acetyl coenzyme A to glucosamine-1-phosphate (GlcN-1-P) to produce N-acetylglucosamine-1-phosphate (GlcNAc-1-P), which is converted into UDP-GlcNAc by the transfer of uridine 5-monophosphate (from uridine 5-triphosphate), a reaction catalyzed by the N-terminal domain. The sequence is that of Bifunctional protein GlmU from Leifsonia xyli subsp. xyli (strain CTCB07).